The primary structure comprises 152 residues: Glutaredoxin-related protein 5, mitochondrial (152 aa).

The transit peptide at M1–A31 directs the protein to the mitochondrion. In terms of domain architecture, Glutaredoxin spans A38–S141. Residue K55 participates in glutathione binding. An N6-succinyllysine modification is found at K55. [2Fe-2S] cluster is bound at residue C63. Residues R93–K97, I105, and C118–D119 each bind glutathione. Residue S151 is modified to Phosphoserine.

The protein belongs to the glutaredoxin family. Monothiol subfamily. In terms of assembly, homodimer. Interacts with ISCU. Interacts with BOLA1. In terms of tissue distribution, detected in bone, liver, muscle and kidney.

Its subcellular location is the mitochondrion matrix. Its function is as follows. Monothiol glutaredoxin involved in mitochondrial iron-sulfur (Fe/S) cluster transfer. Receives 2Fe/2S clusters from scaffold protein ISCU and mediates their transfer to apoproteins, to the 4Fe/FS cluster biosynthesis machinery, or export from mitochondrion. Required for normal regulation of hemoglobin synthesis by the iron-sulfur protein ACO1. This chain is Glutaredoxin-related protein 5, mitochondrial (Glrx5), found in Mus musculus (Mouse).